We begin with the raw amino-acid sequence, 462 residues long: Cysteine--tRNA ligase (462 aa).

Residue Cys24 participates in Zn(2+) binding. Residues 26–36 (PTVYDDAHLGH) carry the 'HIGH' region motif. Residues Cys199, His224, and Glu228 each coordinate Zn(2+). The short motif at 256–260 (KMSKS) is the 'KMSKS' region element. Lys259 serves as a coordination point for ATP.

This sequence belongs to the class-I aminoacyl-tRNA synthetase family. In terms of assembly, monomer. Requires Zn(2+) as cofactor.

Its subcellular location is the cytoplasm. It catalyses the reaction tRNA(Cys) + L-cysteine + ATP = L-cysteinyl-tRNA(Cys) + AMP + diphosphate. The chain is Cysteine--tRNA ligase from Campylobacter jejuni subsp. doylei (strain ATCC BAA-1458 / RM4099 / 269.97).